The primary structure comprises 233 residues: Probable GTP-binding protein EngB (233 aa).

One can recognise an EngB-type G domain in the interval 23 to 209 (AVPEVAFAGR…QRIVAGWLCL (187 aa)). GTP contacts are provided by residues 31-38 (GRSNAGKS), 58-62 (GRTQH), 82-85 (DLPG), 149-152 (TKAD), and 188-190 (FSS). Mg(2+)-binding residues include S38 and T60.

The protein belongs to the TRAFAC class TrmE-Era-EngA-EngB-Septin-like GTPase superfamily. EngB GTPase family. Mg(2+) serves as cofactor.

Functionally, necessary for normal cell division and for the maintenance of normal septation. This Ralstonia pickettii (strain 12J) protein is Probable GTP-binding protein EngB.